We begin with the raw amino-acid sequence, 934 residues long: Glycine dehydrogenase (decarboxylating) (934 aa).

An N6-(pyridoxal phosphate)lysine modification is found at K687.

It belongs to the GcvP family. As to quaternary structure, the glycine cleavage system is composed of four proteins: P, T, L and H. It depends on pyridoxal 5'-phosphate as a cofactor.

The enzyme catalyses N(6)-[(R)-lipoyl]-L-lysyl-[glycine-cleavage complex H protein] + glycine + H(+) = N(6)-[(R)-S(8)-aminomethyldihydrolipoyl]-L-lysyl-[glycine-cleavage complex H protein] + CO2. Functionally, the glycine cleavage system catalyzes the degradation of glycine. The P protein binds the alpha-amino group of glycine through its pyridoxal phosphate cofactor; CO(2) is released and the remaining methylamine moiety is then transferred to the lipoamide cofactor of the H protein. The sequence is that of Glycine dehydrogenase (decarboxylating) from Nocardia farcinica (strain IFM 10152).